Reading from the N-terminus, the 384-residue chain is tRNA-specific 2-thiouridylase MnmA (384 aa).

ATP is bound by residues 9–16 and Met-35; that span reads GMSGGVDS. The interaction with target base in tRNA stretch occupies residues 95–97; the sequence is NPD. The Nucleophile role is filled by Cys-100. Cys-100 and Cys-196 are disulfide-bonded. Residue Gly-124 participates in ATP binding. The tract at residues 146–148 is interaction with tRNA; that stretch reads KDQ. The Cysteine persulfide intermediate role is filled by Cys-196. An interaction with tRNA region spans residues 308–309; sequence RY.

This sequence belongs to the MnmA/TRMU family.

The protein localises to the cytoplasm. The enzyme catalyses S-sulfanyl-L-cysteinyl-[protein] + uridine(34) in tRNA + AH2 + ATP = 2-thiouridine(34) in tRNA + L-cysteinyl-[protein] + A + AMP + diphosphate + H(+). Catalyzes the 2-thiolation of uridine at the wobble position (U34) of tRNA, leading to the formation of s(2)U34. This chain is tRNA-specific 2-thiouridylase MnmA, found in Burkholderia vietnamiensis (strain G4 / LMG 22486) (Burkholderia cepacia (strain R1808)).